The sequence spans 376 residues: Probable allantoicase (376 aa).

The protein belongs to the allantoicase family.

The catalysed reaction is allantoate + H2O = (S)-ureidoglycolate + urea. It participates in nitrogen metabolism; (S)-allantoin degradation; (S)-ureidoglycolate from allantoate (aminidohydrolase route): step 1/1. This Streptomyces avermitilis (strain ATCC 31267 / DSM 46492 / JCM 5070 / NBRC 14893 / NCIMB 12804 / NRRL 8165 / MA-4680) protein is Probable allantoicase.